We begin with the raw amino-acid sequence, 189 residues long: Potassium-transporting ATPase KdpC subunit (189 aa).

A helical membrane pass occupies residues 6-26 (PAIMMVLVFTIICGGIYPAVV).

This sequence belongs to the KdpC family. In terms of assembly, the system is composed of three essential subunits: KdpA, KdpB and KdpC.

The protein resides in the cell inner membrane. In terms of biological role, part of the high-affinity ATP-driven potassium transport (or Kdp) system, which catalyzes the hydrolysis of ATP coupled with the electrogenic transport of potassium into the cytoplasm. This subunit acts as a catalytic chaperone that increases the ATP-binding affinity of the ATP-hydrolyzing subunit KdpB by the formation of a transient KdpB/KdpC/ATP ternary complex. In Geobacter metallireducens (strain ATCC 53774 / DSM 7210 / GS-15), this protein is Potassium-transporting ATPase KdpC subunit.